We begin with the raw amino-acid sequence, 524 residues long: tRNA-2-methylthio-N(6)-dimethylallyladenosine synthase (524 aa).

Residues 1 to 12 (MNTHPSHPDHPA) show a composition bias toward basic and acidic residues. The interval 1-23 (MNTHPSHPDHPADTLPARGNREG) is disordered. The MTTase N-terminal domain occupies 27-143 (RTYEVRTFGC…LPTLLNRAEH (117 aa)). [4Fe-4S] cluster-binding residues include C36, C72, C106, C180, C184, and C187. Positions 166–402 (RESAYAGWVS…MALQERICEE (237 aa)) constitute a Radical SAM core domain. In terms of domain architecture, TRAM spans 405–476 (QKFIGQTVEL…PFFLIADAGV (72 aa)).

The protein belongs to the methylthiotransferase family. MiaB subfamily. Monomer. [4Fe-4S] cluster serves as cofactor.

It localises to the cytoplasm. It catalyses the reaction N(6)-dimethylallyladenosine(37) in tRNA + (sulfur carrier)-SH + AH2 + 2 S-adenosyl-L-methionine = 2-methylsulfanyl-N(6)-dimethylallyladenosine(37) in tRNA + (sulfur carrier)-H + 5'-deoxyadenosine + L-methionine + A + S-adenosyl-L-homocysteine + 2 H(+). In terms of biological role, catalyzes the methylthiolation of N6-(dimethylallyl)adenosine (i(6)A), leading to the formation of 2-methylthio-N6-(dimethylallyl)adenosine (ms(2)i(6)A) at position 37 in tRNAs that read codons beginning with uridine. The polypeptide is tRNA-2-methylthio-N(6)-dimethylallyladenosine synthase (Corynebacterium efficiens (strain DSM 44549 / YS-314 / AJ 12310 / JCM 11189 / NBRC 100395)).